We begin with the raw amino-acid sequence, 240 residues long: Sugar fermentation stimulation protein homolog (240 aa).

Belongs to the SfsA family.

The protein is Sugar fermentation stimulation protein homolog of Crocosphaera subtropica (strain ATCC 51142 / BH68) (Cyanothece sp. (strain ATCC 51142)).